The chain runs to 655 residues: A-type voltage-gated potassium channel KCND3 (655 aa).

Residues 1 to 182 (MAAGVAAWLP…FENPHTSTLA (182 aa)) lie on the Cytoplasmic side of the membrane. The segment at 6–21 (AAWLPFARAAAIGWMP) is interaction with KCNIP1 and KCNIP2. Residues 70 to 78 (EKEFFFNED) form an interaction with KCNIP1 region. Residues histidine 104, cysteine 110, cysteine 131, and cysteine 132 each contribute to the Zn(2+) site. Serine 153 carries the phosphoserine modification. A helical membrane pass occupies residues 183–204 (LVFYYVTGFFIAVSVITNVVET). Residues 205–223 (VPCGTVPGSKELPCGERYS) are Extracellular-facing. A helical membrane pass occupies residues 224 to 246 (VAFFCLDTACVMIFTVEYLLRLF). Residues 247-253 (AAPSRYR) lie on the Cytoplasmic side of the membrane. Residues 254 to 277 (FIRSVMSIIDVVAIMPYYIGLVMT) form a helical membrane-spanning segment. The Extracellular segment spans residues 278-283 (NNEDVS). The chain crosses the membrane as a helical; Voltage-sensor span at residues 284 to 306 (GAFVTLRVFRVFRIFKFSRHSQG). At 307–318 (LRILGYTLKSCA) the chain is on the cytoplasmic side. The helical transmembrane segment at 319-343 (SELGFLLFSLTMAIIIFATVMFYAE) threads the bilayer. Residues 344-352 (KGSSASKFT) lie on the Extracellular side of the membrane. The segment at residues 353-366 (SIPASFWYTIVTMT) is an intramembrane region (helical). K(+)-binding residues include threonine 367, leucine 368, glycine 369, and tyrosine 370. The Selectivity filter motif lies at 367 to 372 (TLGYGD). An intramembrane segment occupies 367–374 (TLGYGDMV). A helical membrane pass occupies residues 378 to 400 (IAGKIFGSICSLSGVLVIALPVP). The Cytoplasmic portion of the chain corresponds to 401–655 (VIVSNFSRIY…ASNVVKVSVL (255 aa)). The residue at position 459 (threonine 459) is a Phosphothreonine. The tract at residues 470 to 487 (SLIESQHHHLLHCLEKTT) is interaction with KCNIP1 and KCNIP2. A mediates dendritic targeting region spans residues 472–487 (IESQHHHLLHCLEKTT). Serine 569 carries the phosphoserine; by CaMK2D modification. Serine 585 is subject to Phosphoserine. The interval 618–644 (PAPPALTPEGETRPPPASPGPNTNIPS) is disordered.

This sequence belongs to the potassium channel family. D (Shal) (TC 1.A.1.2) subfamily. Kv4.3/KCND3 sub-subfamily. In terms of assembly, homotetramer. Heterotetramer with KCND2. Associates with the regulatory subunits KCNIP3 and KCNIP4. Interacts with KCNE1, KCNE2, SCN1B and KCNAB1 and DLG1. Component of heteromultimeric potassium channels. Identified in potassium channel complexes containing KCND1, KCND2, KCND3, KCNIP1, KCNIP2, KCNIP3, KCNIP4, DPP6 and DPP10. Interacts with KCNIP1; each KCNIP1 monomer interacts with two adjacent KCND3 subunits, through both the N-terminal inactivation ball of a KCND3 subunit and a C-terminal helix from the adjacent KCND3 subunit, clamping them together; this interaction stabilizes the tetrameric form and modulates the channel gating kinetics namely channel activation and inactivation kinetics and rate of recovery from inactivation. Interacts with DPP6; this interaction modulates the channel gating kinetics namely channel activation and inactivation kinetics and rate of recovery from inactivation. Interacts with KCNIP2; each KCNIP2 monomer interacts with two adjacent KCND3 subunits, through both the N-terminal inactivation ball of a KCND3 subunit and a C-terminal helix from the adjacent KCND3 subunit, clamping them together; this interaction modulates the channel gating kinetics. Regulated through phosphorylation at Ser-569 by CaMK2D. Detected in carotid body chemoreceptor cells and in frontal cortex.

Its subcellular location is the cell membrane. It localises to the sarcolemma. It is found in the cell projection. The protein resides in the dendrite. The enzyme catalyses K(+)(in) = K(+)(out). Functionally, pore-forming (alpha) subunit of voltage-gated A-type potassium channels that mediates transmembrane potassium transport in excitable membranes, in brain and heart. In cardiomyocytes, may generate the transient outward potassium current I(To). In neurons, may conduct the transient subthreshold somatodendritic A-type potassium current (ISA). Kinetics properties are characterized by fast activation at subthreshold membrane potentials, rapid inactivation, and quick recovery from inactivation. Channel properties are modulated by interactions with regulatory subunits. Interaction with the regulatory subunits KCNIP1 or KCNIP2 modulates the channel gating kinetics namely channel activation and inactivation kinetics and rate of recovery from inactivation. Likewise, interaction with DPP6 modulates the channel gating kinetics namely channel activation and inactivation kinetics. In Oryctolagus cuniculus (Rabbit), this protein is A-type voltage-gated potassium channel KCND3.